A 75-amino-acid polypeptide reads, in one-letter code: MTEFLFCFSCCIGEQPQPKRRRRIDRSMIGEPMNFVHTAHVGSGDTNAGFAMGGSFQDQMKSKGGYTPGISEVAL.

S-palmitoyl cysteine attachment occurs at residues Cys-10 and Cys-11. The CRIB domain maps to 29 to 42 (IGEPMNFVHTAHVG).

It belongs to the CDC42SE/SPEC family.

The protein resides in the cytoplasm. It is found in the cytoskeleton. It localises to the cell membrane. In terms of biological role, probably involved in the organization of the actin cytoskeleton by acting downstream of CDC42, inducing actin filament assembly. This is CDC42 small effector protein 2-B (cdc42se2-b) from Xenopus laevis (African clawed frog).